We begin with the raw amino-acid sequence, 579 residues long: XK-related protein 7 (579 aa).

Low complexity predominate over residues 1–18 (MAAKSDGAAASAGPDPEG). The disordered stretch occupies residues 1–40 (MAAKSDGAAASAGPDPEGAAGGARGSAGGRGEAAAAAGPP). Residues 19–31 (AAGGARGSAGGRG) show a composition bias toward gly residues. A run of 2 helical transmembrane segments spans residues 59 to 79 (WVLC…WLAA) and 89 to 109 (YFSL…LLSF). The segment at 146–165 (GAFRTKEGSPEPGPQPAPSS) is disordered. The next 5 helical transmembrane spans lie at 260–280 (LLPA…LASY), 314–334 (GLAF…CIVG), 355–375 (GEEI…WFNV), 384–404 (MTLY…FWYS), and 415–435 (LIMV…MCVY). Residues 466-510 (ADAITSPPRSLPRTTGAERDGASAGERAGTPTPPVFQVRPGLPPT) form a disordered region.

This sequence belongs to the XK family.

It localises to the cell membrane. This Pan troglodytes (Chimpanzee) protein is XK-related protein 7 (XKR7).